Here is a 457-residue protein sequence, read N- to C-terminus: Glycine receptor subunit alpha-1 (457 aa).

Positions 1–28 are cleaved as a signal peptide; the sequence is MYSFNTLRLYLWETIVFFSLAASKEAEA. Topologically, residues 29–250 are extracellular; sequence ARSASKPMSP…RFHLERQMGY (222 aa). A glycan (N-linked (GlcNAc...) asparagine) is linked at N66. The glycine site is built by R93 and S157. A disulfide bridge links C166 with C180. Zn(2+) is bound by residues E220 and D222. The cysteines at positions 226 and 237 are disulfide-linked. 230–235 is a binding site for strychnine; sequence YNTGKF. A glycine-binding site is contributed by T232. Position 243 (H243) interacts with Zn(2+). Residues 251-272 form a helical membrane-spanning segment; sequence YLIQMYIPSLLIVILSWISFWI. Residues 273–277 lie on the Cytoplasmic side of the membrane; it reads NMDAA. Residues 278-298 form a helical membrane-spanning segment; that stretch reads PARVGLGITTVLTMTTQSSGS. Residues 299-309 lie on the Extracellular side of the membrane; the sequence is RASLPKVSYVK. The helical transmembrane segment at 310 to 330 threads the bilayer; sequence AIDIWMAVCLLFVFSALLEYA. At 331-425 the chain is on the cytoplasmic side; that stretch reads AVNFVSRQHK…FIQRAKKIDK (95 aa). Residues 391 to 410 form a disordered region; it reads KGANNSNTTNPPPAPSKSPE. The chain crosses the membrane as a helical span at residues 426–446; that stretch reads ISRIGFPMAFLIFNMFYWIIY. Residues 447 to 457 lie on the Extracellular side of the membrane; that stretch reads KIVRREDVHNQ.

This sequence belongs to the ligand-gated ion channel (TC 1.A.9) family. Glycine receptor (TC 1.A.9.3) subfamily. GLRA1 sub-subfamily. In terms of assembly, interacts with GLRB to form heteropentameric channels; this is probably the predominant form in vivo. Heteropentamer composed of four GLRA1 subunits and one GLRB subunit. Heteropentamer composed of two GLRA1 and three GLRB. Heteropentamer composed of three GLRA1 and two GLRB. Homopentamer (in vitro). Both homopentamers and heteropentamers form functional ion channels, but their characteristics are subtly different. Detected on spinal cord neurons (at protein level). Detected in spinal cord.

It localises to the postsynaptic cell membrane. It is found in the synapse. The protein resides in the perikaryon. Its subcellular location is the cell projection. The protein localises to the dendrite. It localises to the cell membrane. The catalysed reaction is chloride(in) = chloride(out). Channel opening is triggered by extracellular glycine. Channel characteristics depend on the subunit composition; heteropentameric channels are activated by lower glycine levels and display faster desensitization. Functionally, subunit of heteromeric glycine-gated chloride channels. Plays an important role in the down-regulation of neuronal excitability. Contributes to the generation of inhibitory postsynaptic currents. Channel activity is potentiated by ethanol. Potentiation of channel activity by intoxicating levels of ethanol contribute to the sedative effects of ethanol. The chain is Glycine receptor subunit alpha-1 (GLRA1) from Bos taurus (Bovine).